The sequence spans 292 residues: Large ribosomal subunit protein mL67 (292 aa).

The segment at 59-83 (VELKSPSRLQLKSEPGNKGNPKGHG) is disordered.

This sequence belongs to the mitochondrion-specific ribosomal protein mL67 family. In terms of assembly, component of the mitochondrial large ribosomal subunit (mt-LSU). Mature N.crassa 74S mitochondrial ribosomes consist of a small (37S) and a large (54S) subunit. The 37S small subunit contains a 16S ribosomal RNA (16S mt-rRNA) and 32 different proteins. The 54S large subunit contains a 23S rRNA (23S mt-rRNA) and 42 different proteins.

It localises to the mitochondrion. In terms of biological role, component of the mitochondrial ribosome (mitoribosome), a dedicated translation machinery responsible for the synthesis of mitochondrial genome-encoded proteins, including at least some of the essential transmembrane subunits of the mitochondrial respiratory chain. The mitoribosomes are attached to the mitochondrial inner membrane and translation products are cotranslationally integrated into the membrane. mL67/MHR1 also has extraribosomal functions, being involved in regulation of mitochondrial DNA recombination, maintenance and repair, and generation of homoplasmic cells. mL67/MHR1 also acts as a transcription factor involved in regulation of RNA polymerase II-dependent transcription. This Neurospora crassa (strain ATCC 24698 / 74-OR23-1A / CBS 708.71 / DSM 1257 / FGSC 987) protein is Large ribosomal subunit protein mL67 (mhr1).